Consider the following 190-residue polypeptide: Ribonuclease HII (190 aa).

An RNase H type-2 domain is found at 1-190 (MAGVDEVGRG…FCRKIIENPD (190 aa)). A divalent metal cation is bound by residues Asp5, Glu6, and Asp101.

This sequence belongs to the RNase HII family. The cofactor is Mn(2+). Mg(2+) is required as a cofactor.

It localises to the cytoplasm. It carries out the reaction Endonucleolytic cleavage to 5'-phosphomonoester.. Endonuclease that specifically degrades the RNA of RNA-DNA hybrids. The protein is Ribonuclease HII (rnhB) of Synechocystis sp. (strain ATCC 27184 / PCC 6803 / Kazusa).